The chain runs to 193 residues: Ribonuclease HII (193 aa).

Positions 15–193 (YIVAGIDEAG…PYHRRSFKCC (179 aa)) constitute an RNase H type-2 domain. A divalent metal cation is bound by residues Asp21, Glu22, and Asp112.

The protein belongs to the RNase HII family. It depends on Mn(2+) as a cofactor. Mg(2+) serves as cofactor.

The protein localises to the cytoplasm. The enzyme catalyses Endonucleolytic cleavage to 5'-phosphomonoester.. In terms of biological role, endonuclease that specifically degrades the RNA of RNA-DNA hybrids. This Rickettsia felis (strain ATCC VR-1525 / URRWXCal2) (Rickettsia azadi) protein is Ribonuclease HII.